The chain runs to 101 residues: MACPLEKALDVMVSTFHKYSGKEGDKFKLNKSELKELLTRELPSFLGKRTDEAAFQKLMSNLDSNRDNEVDFQEYCVFLSCIAMMCNEFFEGFPDKQPRKK.

Alanine 2 is modified (N-acetylalanine). Lysine 7 is subject to N6-acetyllysine. 2 EF-hand domains span residues 12–47 (MVSTFHKYSGKEGDKFKLNKSELKELLTRELPSFLG) and 50–85 (TDEAAFQKLMSNLDSNRDNEVDFQEYCVFLSCIAMM). Residues lysine 28 and glutamate 33 each coordinate Ca(2+). Lysine 35 carries the post-translational modification N6-acetyllysine. Ca(2+)-binding residues include aspartate 63, asparagine 65, aspartate 67, glutamate 69, and glutamate 74.

The protein belongs to the S-100 family. As to quaternary structure, homodimer. Interacts with PPFIBP1 in a calcium-dependent mode. Interacts with PGLYRP1; this complex acts as a chemoattractant that promotes lymphocyte movement. Interacts with MYH9; this interaction increases cell motility. Interacts with Annexin 2/ANXA2. Interacts with TP53; this interaction promotes TP53 degradation. Interacts with CCR5. Interacts with FCGR3A; this interaction inhibits PKC-dependent phosphorylation of FCGR3A. In terms of tissue distribution, ubiquitously expressed.

The protein localises to the secreted. It is found in the nucleus. Its subcellular location is the cytoplasm. Calcium-binding protein that plays a role in various cellular processes including motility, angiogenesis, cell differentiation, apoptosis, and autophagy. Increases cell motility and invasiveness by interacting with non-muscle myosin heavy chain (NMMHC) IIA/MYH9. Mechanistically, promotes filament depolymerization and increases the amount of soluble myosin-IIA, resulting in the formation of stable protrusions facilitating chemotaxis. Also modulates the pro-apoptotic function of TP53 by binding to its C-terminal transactivation domain within the nucleus and reducing its protein levels. Within the extracellular space, stimulates cytokine production including granulocyte colony-stimulating factor and CCL24 from T-lymphocytes. In addition, stimulates T-lymphocyte chemotaxis by acting as a chemoattractant complex with PGLYRP1 that promotes lymphocyte migration via CCR5 and CXCR3 receptors. The chain is Protein S100-A4 (S100A4) from Homo sapiens (Human).